Consider the following 149-residue polypeptide: Protein SprT-like (149 aa).

Residues 6 to 147 form the SprT-like domain; the sequence is LQALVEQISI…VCGRCRSKLK (142 aa). His67 is a binding site for Zn(2+). Glu68 is an active-site residue. Zn(2+) is bound at residue His71.

This sequence belongs to the SprT family. It depends on Zn(2+) as a cofactor.

It is found in the cytoplasm. The chain is Protein SprT-like from Geobacillus kaustophilus (strain HTA426).